A 205-amino-acid polypeptide reads, in one-letter code: MNEQLINRTMAFAGILQAIAQVQHLARHGELDNAELAASLNTILVTNPDNTADVYPDKIVLQKGYKLILNQLGDSSQKDVEITRYLVGVLALERKLVRSNSGLGMLAERINQVNRQLHHFAITDEQVVANLASIYSDIISNLGPKIQISGNPVCLQRPIVQHKIRALLLAAIRSAVLWRQLGGKRRHLVFARKAIVDTAKKSLTL.

The protein belongs to the HflD family.

The protein resides in the cytoplasm. It is found in the cell inner membrane. This is High frequency lysogenization protein HflD homolog from Shewanella sp. (strain W3-18-1).